The sequence spans 492 residues: GTPase-GDP dissociation stimulator arz1 (492 aa).

It is found in the cytoplasm. It localises to the nucleus. In terms of biological role, probably acts as a GEF (guanine nucleotide exchange factor) for the Rho family of small GTP-binding proteins (G proteins) that stimulates the dissociation of GDP to enable subsequent binding of GTP. May also chaperone the processing and/or trafficking of small GTPases independently of GEF activity. May be involved in the control of polarized cell growth via CDC42-mediated signaling. May also be involved in the control of cell-wall organization via RHO1-mediated signaling. In Schizosaccharomyces pombe (strain 972 / ATCC 24843) (Fission yeast), this protein is GTPase-GDP dissociation stimulator arz1.